The following is a 278-amino-acid chain: Undecaprenyl-diphosphatase 3 (278 aa).

Transmembrane regions (helical) follow at residues 42 to 62, 88 to 108, 119 to 139, 187 to 207, 224 to 244, and 254 to 274; these read DITAFTAIIQVGAVFATLLYF, YRFGWAVILGSIPIGLVGVAF, LWFVGGALILWSGVMGYADHV, VAVTRLSFFLSIPALMAAAAL, ATIIATVVSFAVAYVAIAWLL, and VFIGYRLALGATVLFLVATGI.

Belongs to the UppP family.

It is found in the cell membrane. The enzyme catalyses di-trans,octa-cis-undecaprenyl diphosphate + H2O = di-trans,octa-cis-undecaprenyl phosphate + phosphate + H(+). In terms of biological role, catalyzes the dephosphorylation of undecaprenyl diphosphate (UPP). Confers resistance to bacitracin. The sequence is that of Undecaprenyl-diphosphatase 3 from Frankia casuarinae (strain DSM 45818 / CECT 9043 / HFP020203 / CcI3).